A 283-amino-acid polypeptide reads, in one-letter code: MEEIKETVEKKNKEKKYLNDYKIISEGNNIKVLQKKDFKPKFSLVSYKNYEQNFDFENAKIVSTNFAIDRHIKMKNPPDPFVFIKMPSSKLVQSQLKLYYENEGYKDIPVWITPCSAFMRYIKSYPIVGTVTETMEKKKGFTNRFLSTSETKASVSVGFFGCESSMEVTSGYEYEDTVTSEETRSWSQTLNEGSYIVYQNVLVYAYIIYGGSYKPYIDQMNKFNPGLNIKFFREDKCIFFVPINRDDAFTLRYQDNTWDPVEYDVLIDYLGQNQDKWFSGGLP.

It is found in the cytoplasm. Knockout of the gene for this protein causes small aggregate formation. May regulate the secretion or processing of a secreted factor that regulates aggregate size. In Dictyostelium discoideum (Social amoeba), this protein is Small aggregate formation protein (smlA).